Consider the following 79-residue polypeptide: Conotoxin TsMSGL-2 (79 aa).

The N-terminal stretch at 1–24 (MSGLGIMVLTLLLLVFMATSHQDA) is a signal peptide. A propeptide spanning residues 25-46 (GEKQATQRDAVNVRRRRSIAGR) is cleaved from the precursor. 3 disulfide bridges follow: Cys-52–Cys-64, Cys-56–Cys-73, and Cys-63–Cys-77. Leu-78 bears the Leucine amide mark.

This sequence belongs to the conotoxin O3 superfamily. In terms of tissue distribution, expressed by the venom duct.

The protein localises to the secreted. In Conus tessulatus (Tessellate cone), this protein is Conotoxin TsMSGL-2.